The primary structure comprises 338 residues: Lipoate-protein ligase A (338 aa).

Positions 29–216 constitute a BPL/LPL catalytic domain; sequence PATQRVLFLW…AFFAHYGERV (188 aa). Residues Arg-71, 76-79, and Lys-134 each bind ATP; that span reads GAVF. Lys-134 provides a ligand contact to (R)-lipoate.

Belongs to the LplA family. Monomer.

It localises to the cytoplasm. It catalyses the reaction L-lysyl-[lipoyl-carrier protein] + (R)-lipoate + ATP = N(6)-[(R)-lipoyl]-L-lysyl-[lipoyl-carrier protein] + AMP + diphosphate + H(+). The protein operates within protein modification; protein lipoylation via exogenous pathway; protein N(6)-(lipoyl)lysine from lipoate: step 1/2. It functions in the pathway protein modification; protein lipoylation via exogenous pathway; protein N(6)-(lipoyl)lysine from lipoate: step 2/2. Functionally, catalyzes both the ATP-dependent activation of exogenously supplied lipoate to lipoyl-AMP and the transfer of the activated lipoyl onto the lipoyl domains of lipoate-dependent enzymes. This Salmonella schwarzengrund (strain CVM19633) protein is Lipoate-protein ligase A.